We begin with the raw amino-acid sequence, 394 residues long: Flap endonuclease 1-A (394 aa).

The N-domain stretch occupies residues 1–105 (MGIKGLTGLL…GVLSKRLERR (105 aa)). Residue aspartate 34 participates in Mg(2+) binding. DNA is bound by residues arginine 47 and arginine 71. Mg(2+) is bound by residues aspartate 87, glutamate 159, glutamate 161, aspartate 180, and aspartate 182. The I-domain stretch occupies residues 123-254 (DVDRFSRRTV…KSALKLIREY (132 aa)). Glutamate 159 is a DNA binding site. Positions 232 and 234 each coordinate DNA. Position 234 (aspartate 234) interacts with Mg(2+). Positions 341-349 (QQGRLDGFF) are interaction with PCNA. Positions 356 to 375 (KAAAPAPVGKAKGKGKVDAK) are disordered.

Belongs to the XPG/RAD2 endonuclease family. FEN1 subfamily. Interacts with PCNA. Three molecules of FEN1 bind to one PCNA trimer with each molecule binding to one PCNA monomer. PCNA stimulates the nuclease activity without altering cleavage specificity. Requires Mg(2+) as cofactor. Phosphorylated. Phosphorylation upon DNA damage induces relocalization to the nuclear plasma.

It localises to the nucleus. Its subcellular location is the nucleolus. It is found in the nucleoplasm. The protein localises to the mitochondrion. Structure-specific nuclease with 5'-flap endonuclease and 5'-3' exonuclease activities involved in DNA replication and repair. During DNA replication, cleaves the 5'-overhanging flap structure that is generated by displacement synthesis when DNA polymerase encounters the 5'-end of a downstream Okazaki fragment. It enters the flap from the 5'-end and then tracks to cleave the flap base, leaving a nick for ligation. Also involved in the long patch base excision repair (LP-BER) pathway, by cleaving within the apurinic/apyrimidinic (AP) site-terminated flap. Acts as a genome stabilization factor that prevents flaps from equilibrating into structures that lead to duplications and deletions. Also possesses 5'-3' exonuclease activity on nicked or gapped double-stranded DNA, and exhibits RNase H activity. Also involved in replication and repair of rDNA and in repairing mitochondrial DNA. This is Flap endonuclease 1-A from Laccaria bicolor (strain S238N-H82 / ATCC MYA-4686) (Bicoloured deceiver).